The chain runs to 442 residues: UDP-glycosyltransferase 78D4 (442 aa).

UDP-alpha-D-glucose-binding positions include 322–324, 339–347, and 361–364; these read APQ, HGGWNSVLE, and FGDH.

Belongs to the UDP-glycosyltransferase family.

This chain is UDP-glycosyltransferase 78D4 (UGT78D4), found in Arabidopsis thaliana (Mouse-ear cress).